Consider the following 296-residue polypeptide: 4-hydroxybenzoate octaprenyltransferase (296 aa).

The next 9 membrane-spanning stretches (helical) occupy residues 28-48, 52-72, 102-122, 123-140, 146-166, 169-189, 219-239, 241-261, and 275-295; these read PIGI…AGKG, LNTV…GCVI, ALVL…FTNS, TTIW…CYPF, YYPQ…AFTA, GELP…TVGY, VIIL…GSRF, LGAF…WEFW, and FLHN…DYAL.

It belongs to the UbiA prenyltransferase family. Requires Mg(2+) as cofactor.

The protein resides in the cell inner membrane. It carries out the reaction all-trans-octaprenyl diphosphate + 4-hydroxybenzoate = 4-hydroxy-3-(all-trans-octaprenyl)benzoate + diphosphate. Its pathway is cofactor biosynthesis; ubiquinone biosynthesis. Catalyzes the prenylation of para-hydroxybenzoate (PHB) with an all-trans polyprenyl group. Mediates the second step in the final reaction sequence of ubiquinone-8 (UQ-8) biosynthesis, which is the condensation of the polyisoprenoid side chain with PHB, generating the first membrane-bound Q intermediate 3-octaprenyl-4-hydroxybenzoate. The sequence is that of 4-hydroxybenzoate octaprenyltransferase from Pseudomonas syringae pv. tomato (strain ATCC BAA-871 / DC3000).